We begin with the raw amino-acid sequence, 1271 residues long: Clustered mitochondria protein homolog (1271 aa).

TPR repeat units follow at residues 104-138 (RHKPYTLAAVYEHLNKFREVIGLHFIDRRAFELGE) and 502-535 (CYGLSTDGTKVYSDSQFHEALKPIAEAFHMKPHK). The Clu domain occupies 329–580 (DQSRPQLSIL…RSTPLDIDFI (252 aa)). Over residues 729–763 (QEEKSKIEDNEKAIEEEKKEEKTEKKEEKEEKADE) the composition is skewed to basic and acidic residues. The disordered stretch occupies residues 729 to 783 (QEEKSKIEDNEKAIEEEKKEEKTEKKEEKEEKADEEKSENEEDKTKPEEPSKGVF). 3 TPR repeats span residues 1067-1100 (ISSYINSAYFEAANSSYVNAFKLYEKALGDWDFV), 1109-1142 (VTTLTNLAEILAQLKITDKANRLFSAALELSEKI), and 1151-1184 (AMIHYRFAGTLVNENRFDEALGHFEKAHTTFSRH). Residues 1212–1271 (QAKDKNKPKKVKAPPVPPQATTKKSKNKSKMAQTQISKLHLNSSTRFSSSSRVKPRLKKK) are disordered. Over residues 1241 to 1253 (KMAQTQISKLHLN) the composition is skewed to polar residues. Low complexity predominate over residues 1254-1263 (SSTRFSSSSR).

It belongs to the CLU family. May associate with the eukaryotic translation initiation factor 3 (eIF-3) complex.

The protein localises to the cytoplasm. Its function is as follows. mRNA-binding protein involved in proper cytoplasmic distribution of mitochondria. This chain is Clustered mitochondria protein homolog, found in Meyerozyma guilliermondii (strain ATCC 6260 / CBS 566 / DSM 6381 / JCM 1539 / NBRC 10279 / NRRL Y-324) (Yeast).